The sequence spans 129 residues: Phosphomevalonate dehydratase small subunit (129 aa).

Serine 61 (proton acceptor) is an active-site residue.

This sequence belongs to the AcnX type II small subunit family. As to quaternary structure, heterodimer composed of a large subunit (PMDh-L) and a small subunit (PMDh-S).

It carries out the reaction (R)-5-phosphomevalonate = (2E)-3-methyl-5-phosphooxypent-2-enoate + H2O. It participates in isoprenoid biosynthesis; isopentenyl diphosphate biosynthesis via mevalonate pathway. In terms of biological role, component of a hydro-lyase that catalyzes the dehydration of mevalonate 5-phosphate (MVA5P) to form trans-anhydromevalonate 5-phosphate (tAHMP). Involved in the archaeal mevalonate (MVA) pathway, which provides fundamental precursors for isoprenoid biosynthesis, such as isopentenyl diphosphate (IPP) and dimethylallyl diphosphate (DMAPP). The protein is Phosphomevalonate dehydratase small subunit of Methanocaldococcus jannaschii (strain ATCC 43067 / DSM 2661 / JAL-1 / JCM 10045 / NBRC 100440) (Methanococcus jannaschii).